The primary structure comprises 168 residues: Ribosome maturation factor RimM (168 aa).

The PRC barrel domain maps to 94-167; the sequence is DGQYYYHQII…FVTVELMEGL (74 aa).

The protein belongs to the RimM family. As to quaternary structure, binds ribosomal protein uS19.

It is found in the cytoplasm. Functionally, an accessory protein needed during the final step in the assembly of 30S ribosomal subunit, possibly for assembly of the head region. Essential for efficient processing of 16S rRNA. May be needed both before and after RbfA during the maturation of 16S rRNA. It has affinity for free ribosomal 30S subunits but not for 70S ribosomes. The chain is Ribosome maturation factor RimM from Limosilactobacillus reuteri (strain DSM 20016) (Lactobacillus reuteri).